We begin with the raw amino-acid sequence, 265 residues long: Type II pantothenate kinase (265 aa).

6–13 (DAGGTLIK) provides a ligand contact to ATP. The active-site Proton acceptor is Glu70. ATP-binding positions include Thr99, 121 to 125 (GGMIQ), Tyr137, and Ser225.

The protein belongs to the type II pantothenate kinase family. Homodimer.

The protein localises to the cytoplasm. It catalyses the reaction (R)-pantothenate + ATP = (R)-4'-phosphopantothenate + ADP + H(+). It functions in the pathway cofactor biosynthesis; coenzyme A biosynthesis; CoA from (R)-pantothenate: step 1/5. Functionally, catalyzes the phosphorylation of pantothenate (Pan), the first step in CoA biosynthesis. In Staphylococcus epidermidis (strain ATCC 35984 / DSM 28319 / BCRC 17069 / CCUG 31568 / BM 3577 / RP62A), this protein is Type II pantothenate kinase.